The chain runs to 210 residues: Ribosomal RNA large subunit methyltransferase E (210 aa).

The S-adenosyl-L-methionine site is built by Gly55, Trp57, Asp75, Asp93, and Asp117. Residue Lys157 is the Proton acceptor of the active site. The tract at residues 175-210 (YRQVKTTKPPSSRKKSSEMYVVGLDFKPKKNKKSKD) is disordered.

It belongs to the class I-like SAM-binding methyltransferase superfamily. RNA methyltransferase RlmE family.

Its subcellular location is the cytoplasm. The catalysed reaction is uridine(2552) in 23S rRNA + S-adenosyl-L-methionine = 2'-O-methyluridine(2552) in 23S rRNA + S-adenosyl-L-homocysteine + H(+). In terms of biological role, specifically methylates the uridine in position 2552 of 23S rRNA at the 2'-O position of the ribose in the fully assembled 50S ribosomal subunit. The protein is Ribosomal RNA large subunit methyltransferase E of Methanobrevibacter smithii (strain ATCC 35061 / DSM 861 / OCM 144 / PS).